Here is a 314-residue protein sequence, read N- to C-terminus: MLENYKHTTVLLDEAVNGLNIRSGGIYIDGTFGRGGHSRLILSQLGPEGRLLAIDRDPQAIEAAKAIDDSRFSIIHGPFSAMADYVAELGLTGQIDGVLLDLGVSSPQLDDPERGFSFMRDGPLDMRMDPTRGSSAAEWLMKAEADDIVWVLKTFGEERFAKRIARAIVERNRTEPMTRTKELASLIAAASPIREKHKHPATRSFQAIRIYINSELEEIERALEGALSVLAPQGRLSVISFHSLEDRIVKRFIRHQSRGPQVPAGLPLTEEQLRSQGGQTLKPVGKKLMPSEAEVAENPRARSSVLRFAERLPA.

S-adenosyl-L-methionine is bound by residues 35–37 (GGH), Asp-55, Phe-79, Asp-101, and Gln-108. The segment at 276–296 (QGGQTLKPVGKKLMPSEAEVA) is disordered.

Belongs to the methyltransferase superfamily. RsmH family.

Its subcellular location is the cytoplasm. The catalysed reaction is cytidine(1402) in 16S rRNA + S-adenosyl-L-methionine = N(4)-methylcytidine(1402) in 16S rRNA + S-adenosyl-L-homocysteine + H(+). Its function is as follows. Specifically methylates the N4 position of cytidine in position 1402 (C1402) of 16S rRNA. This is Ribosomal RNA small subunit methyltransferase H from Pectobacterium atrosepticum (strain SCRI 1043 / ATCC BAA-672) (Erwinia carotovora subsp. atroseptica).